An 811-amino-acid chain; its full sequence is Capsid protein VP1 (811 aa).

Residues aspartate 321 to threonine 367 are disordered. The segment covering threonine 346 to threonine 366 has biased composition (polar residues).

It localises to the virion. In terms of biological role, capsid protein self-assembles to form an icosahedral capsid with a T=1 symmetry, about 22 nm in diameter, and consisting of 60 copies of size variants of the capsid proteins, which differ in the N-terminushe capsid encapsulates the genomic ssDNA. Capsid proteins are responsible for the attachment to host cell receptors. This attachment induces virion internalization predominantly through clathrin-dependent endocytosis. The polypeptide is Capsid protein VP1 (VP) (Galleria mellonella densovirus (GmDNV)).